Here is a 397-residue protein sequence, read N- to C-terminus: E3 ubiquitin-protein ligase RNF149 (397 aa).

An N-terminal signal peptide occupies residues 1–20 (MLRWLCLYSALCALTHGSSA). Positions 39-49 (TNSSVTGSTES) are enriched in polar residues. The disordered stretch occupies residues 39–60 (TNSSVTGSTESGRYGDSSPKES). N-linked (GlcNAc...) asparagine glycosylation is found at Asn-40 and Asn-140. In terms of domain architecture, PA spans 83 to 170 (YIVPGTSAAA…PKGMEIMEPL (88 aa)). Residues 196–216 (VVFVAIAFITMMIISLAWLIF) form a helical membrane-spanning segment. Asn-231 is a glycosylation site (N-linked (GlcNAc...) asparagine). The RING-type; atypical zinc finger occupies 264–305 (CAVCIENYKTKDLVRILPCKHIFHRLCIDPWLIEHRTCPMCK). The interval 341–397 (SITQEESRSEGNNLPSSSTGSSLQQSNSVKDDAGETTALLDDPGNDNAAATHTQDSH) is disordered. Residues 351-368 (GNNLPSSSTGSSLQQSNS) show a composition bias toward low complexity. Polar residues predominate over residues 388–397 (AAATHTQDSH).

The protein resides in the membrane. It catalyses the reaction S-ubiquitinyl-[E2 ubiquitin-conjugating enzyme]-L-cysteine + [acceptor protein]-L-lysine = [E2 ubiquitin-conjugating enzyme]-L-cysteine + N(6)-ubiquitinyl-[acceptor protein]-L-lysine.. It participates in protein modification; protein ubiquitination. In terms of biological role, E3 ubiquitin-protein ligase. Ubiquitinates BRAF, inducing its proteasomal degradation. In Xenopus laevis (African clawed frog), this protein is E3 ubiquitin-protein ligase RNF149 (rnf149).